We begin with the raw amino-acid sequence, 608 residues long: CTP synthase (608 aa).

Residues 1-271 (MGQAHITKHI…DAYVVRRLGL (271 aa)) form an amidoligase domain region. Residue Ser18 participates in CTP binding. Residue Ser18 coordinates UTP. Residues 19–24 (SLGKGL) and Asp76 each bind ATP. The Mg(2+) site is built by Asp76 and Glu145. Residues 152–154 (DIE), 192–197 (KTKPTQ), and Lys228 each bind CTP. UTP contacts are provided by residues 192 to 197 (KTKPTQ) and Lys228. Positions 296 to 545 (TIAIVGKYVD…VAAAVAHADR (250 aa)) constitute a Glutamine amidotransferase type-1 domain. Gly359 provides a ligand contact to L-glutamine. The Nucleophile; for glutamine hydrolysis role is filled by Cys386. L-glutamine is bound by residues 387-390 (LGLQ), Glu410, and Arg471. Residues His518 and Glu520 contribute to the active site. The segment at 550-608 (LPVDLPSEDAPTPENGVPENGAAQTRGVTAGRSGGSIRRGASASRPSVSSNGTAALVSP) is disordered. Positions 584 to 594 (GSIRRGASASR) are enriched in low complexity.

Belongs to the CTP synthase family. In terms of assembly, homotetramer.

It catalyses the reaction UTP + L-glutamine + ATP + H2O = CTP + L-glutamate + ADP + phosphate + 2 H(+). The enzyme catalyses L-glutamine + H2O = L-glutamate + NH4(+). The catalysed reaction is UTP + NH4(+) + ATP = CTP + ADP + phosphate + 2 H(+). It functions in the pathway pyrimidine metabolism; CTP biosynthesis via de novo pathway; CTP from UDP: step 2/2. Allosterically activated by GTP, when glutamine is the substrate; GTP has no effect on the reaction when ammonia is the substrate. The allosteric effector GTP functions by stabilizing the protein conformation that binds the tetrahedral intermediate(s) formed during glutamine hydrolysis. Inhibited by the product CTP, via allosteric rather than competitive inhibition. Functionally, catalyzes the ATP-dependent amination of UTP to CTP with either L-glutamine or ammonia as the source of nitrogen. Regulates intracellular CTP levels through interactions with the four ribonucleotide triphosphates. The sequence is that of CTP synthase from Frankia casuarinae (strain DSM 45818 / CECT 9043 / HFP020203 / CcI3).